A 117-amino-acid polypeptide reads, in one-letter code: Large ribosomal subunit protein bL19 (117 aa).

The protein belongs to the bacterial ribosomal protein bL19 family.

Functionally, this protein is located at the 30S-50S ribosomal subunit interface and may play a role in the structure and function of the aminoacyl-tRNA binding site. This is Large ribosomal subunit protein bL19 from Shewanella woodyi (strain ATCC 51908 / MS32).